We begin with the raw amino-acid sequence, 199 residues long: Holliday junction branch migration complex subunit RuvA (199 aa).

Positions 1–64 (MIALLTGKLA…EDAINLYGFR (64 aa)) are domain I. A domain II region spans residues 65–143 (TMEEKEMFQL…KLGHGPLQQD (79 aa)). The segment at 144-148 (VAPAD) is flexible linker. The tract at residues 149 to 199 (AHNDMRDDVVSALVNLGYKEAVVQKTVDEIGVAADATVESLLKQALKKLMK) is domain III.

This sequence belongs to the RuvA family. Homotetramer. Forms an RuvA(8)-RuvB(12)-Holliday junction (HJ) complex. HJ DNA is sandwiched between 2 RuvA tetramers; dsDNA enters through RuvA and exits via RuvB. An RuvB hexamer assembles on each DNA strand where it exits the tetramer. Each RuvB hexamer is contacted by two RuvA subunits (via domain III) on 2 adjacent RuvB subunits; this complex drives branch migration. In the full resolvosome a probable DNA-RuvA(4)-RuvB(12)-RuvC(2) complex forms which resolves the HJ.

Its subcellular location is the cytoplasm. The RuvA-RuvB-RuvC complex processes Holliday junction (HJ) DNA during genetic recombination and DNA repair, while the RuvA-RuvB complex plays an important role in the rescue of blocked DNA replication forks via replication fork reversal (RFR). RuvA specifically binds to HJ cruciform DNA, conferring on it an open structure. The RuvB hexamer acts as an ATP-dependent pump, pulling dsDNA into and through the RuvAB complex. HJ branch migration allows RuvC to scan DNA until it finds its consensus sequence, where it cleaves and resolves the cruciform DNA. The polypeptide is Holliday junction branch migration complex subunit RuvA (Geotalea daltonii (strain DSM 22248 / JCM 15807 / FRC-32) (Geobacter daltonii)).